Consider the following 314-residue polypeptide: tRNA pseudouridine synthase B (314 aa).

H43 is a binding site for substrate. The active-site Nucleophile is D48. Positions 76, 179, and 200 each coordinate substrate.

The protein belongs to the pseudouridine synthase TruB family. Type 1 subfamily.

It catalyses the reaction uridine(55) in tRNA = pseudouridine(55) in tRNA. Responsible for synthesis of pseudouridine from uracil-55 in the psi GC loop of transfer RNAs. This Salmonella typhi protein is tRNA pseudouridine synthase B.